A 332-amino-acid chain; its full sequence is Cysteine and histidine-rich domain-containing protein 1 (332 aa).

Ala2 bears the N-acetylalanine mark. The interval 2–77 (ALLCYNRACG…KPPEPVKPEV (76 aa)) is interaction with PPP5C. Residues Cys5, Cys10, Cys24, His27, Cys42, and Cys43 each contribute to the Zn(2+) site. CHORD domains are found at residues 5–64 (CYNR…KGRH) and 157–216 (CKNG…KGRH). Thr47 is modified (phosphothreonine). Phosphoserine is present on Ser51. Residues Cys59, His64, Cys157, Cys162, Cys176, His179, Cys194, Cys195, Cys211, and His216 each coordinate Zn(2+). A disordered region spans residues 62 to 82 (GRHNSEKPPEPVKPEVKTTEK). The segment covering 64–82 (HNSEKPPEPVKPEVKTTEK) has biased composition (basic and acidic residues). Residues 65 to 316 (NSEKPPEPVK…AEPMQWASLE (252 aa)) are interaction with HSP90AA1 and HSP90AB1. A CS domain is found at 227–316 (VVPCRHDWHQ…AEPMQWASLE (90 aa)).

As to quaternary structure, interacts with HSP90AA1, HSP90AB1, PPP5C, ROCK1 and ROCK2.

In terms of biological role, regulates centrosome duplication, probably by inhibiting the kinase activity of ROCK2. Proposed to act as co-chaperone for HSP90. May play a role in the regulation of NOD1 via a HSP90 chaperone complex. In vitro, has intrinsic chaperone activity. This function may be achieved by inhibiting association of ROCK2 with NPM1. Plays a role in ensuring the localization of the tyrosine kinase receptor EGFR to the plasma membrane, and thus ensures the subsequent regulation of EGFR activity and EGF-induced actin cytoskeleton remodeling. Involved in stress response. Prevents tumorigenesis. This Macaca fascicularis (Crab-eating macaque) protein is Cysteine and histidine-rich domain-containing protein 1 (CHORDC1).